The primary structure comprises 549 residues: MKLALVLSLIVSVAAAPTATLANGDTITGLNAIINEAFLGIPFAQPPVGNLRFKPPVPYSASLNGQKFTSYGPSCMQMNPLGNWDSSLPKAAINSLMQSKLFQAVLPNGEDCLTINVVRPSGTKPGANLPVMVWIFGGGFEVGGSSLFPPAQMITASVLMGKPIIHVSMNYRVASWGFLAGPDIKAEGSGNAGLHDQRLGLQWVADNIAGFGGDPSKVTIFGESAGSMSVMCQLLWNDGDNTYNGKPLFRAAIMQSGAMVPSDPVDGPYGTQIYDQVVASAGCGSASDKLACLRSISNDKLFQATSDTPGALAYPSLRLSFLPRPDGTFITDDMFKLVRDGKCANVPVIIGDQNDEGTVFALSSLNVTTDAQARQYFKESFIHASDAEIDTLMAAYPSDITQGSPFDTGIFNAITPQFKRIAAVLGDLAFTLPRRYFLNHFQGGTKYSFLSKQLSGLPVIGTHHANDIVWQDFLVSHSSAVYNNAFIAFANDLDPNKAGLLVNWPKYTSSSQSGNNLLQINALGLYTGKDNFRTAGYDALFTNPSSFFV.

The N-terminal stretch at 1–15 (MKLALVLSLIVSVAA) is a signal peptide. C75 and C112 are joined by a disulfide. The Acyl-ester intermediate role is filled by S224. The cysteines at positions 283 and 292 are disulfide-linked. E356 serves as the catalytic Charge relay system. N366 carries N-linked (GlcNAc...) asparagine glycosylation. H464 acts as the Charge relay system in catalysis.

Belongs to the type-B carboxylesterase/lipase family.

It carries out the reaction a triacylglycerol + H2O = a diacylglycerol + a fatty acid + H(+). This is Lipase 4 (LIP4) from Diutina rugosa (Yeast).